Consider the following 390-residue polypeptide: Phosphoglycerate kinase (390 aa).

Substrate-binding positions include 21–23, R36, 59–62, R113, and R146; these read DMN and HLGR. ATP is bound by residues K197, E319, and 345 to 348; that span reads GGDT.

The protein belongs to the phosphoglycerate kinase family. Monomer.

It is found in the cytoplasm. The catalysed reaction is (2R)-3-phosphoglycerate + ATP = (2R)-3-phospho-glyceroyl phosphate + ADP. It functions in the pathway carbohydrate degradation; glycolysis; pyruvate from D-glyceraldehyde 3-phosphate: step 2/5. This Laribacter hongkongensis (strain HLHK9) protein is Phosphoglycerate kinase.